Consider the following 23-residue polypeptide: Caerin-4.1 (23 aa).

Expressed by the skin parotoid and/or rostral glands.

The protein resides in the secreted. In terms of biological role, antibacterial peptide, that adopts an alpha helical conformation which can disrupt bacterial membranes. Each caerin displays a different antimicrobial specificity. This is Caerin-4.1 from Ranoidea caerulea (Green tree frog).